A 423-amino-acid chain; its full sequence is Putative galacturan 1,4-alpha-galacturonidase C (423 aa).

Positions 1 to 20 are cleaved as a signal peptide; the sequence is MQLRASVLLSFLGLASVGHA. Residues asparagine 92, asparagine 98, asparagine 118, asparagine 156, asparagine 179, and asparagine 191 are each glycosylated (N-linked (GlcNAc...) asparagine). PbH1 repeat units follow at residues 215-236 and 238-258; these read ATNI…AIKP and SYNI…AIGS. The Proton donor role is filled by aspartate 229. The cysteines at positions 231 and 248 are disulfide-linked. N-linked (GlcNAc...) asparagine glycosylation is found at asparagine 245, asparagine 344, and asparagine 362. Residues cysteine 379 and cysteine 385 are joined by a disulfide bond. A glycan (N-linked (GlcNAc...) asparagine) is linked at asparagine 400.

The protein belongs to the glycosyl hydrolase 28 family.

The protein resides in the secreted. The enzyme catalyses [(1-&gt;4)-alpha-D-galacturonosyl](n) + H2O = alpha-D-galacturonate + [(1-&gt;4)-alpha-D-galacturonosyl](n-1). In terms of biological role, specific in hydrolyzing the terminal glycosidic bond of polygalacturonic acid and oligogalacturonates. This is Putative galacturan 1,4-alpha-galacturonidase C (rgxC) from Aspergillus niger (strain ATCC MYA-4892 / CBS 513.88 / FGSC A1513).